The chain runs to 161 residues: ATP synthase subunit b (161 aa).

A helical membrane pass occupies residues 2-22 (VIEWGTALYQLLAFAVLLLIL).

Belongs to the ATPase B chain family. As to quaternary structure, F-type ATPases have 2 components, F(1) - the catalytic core - and F(0) - the membrane proton channel. F(1) has five subunits: alpha(3), beta(3), gamma(1), delta(1), epsilon(1). F(0) has three main subunits: a(1), b(2) and c(10-14). The alpha and beta chains form an alternating ring which encloses part of the gamma chain. F(1) is attached to F(0) by a central stalk formed by the gamma and epsilon chains, while a peripheral stalk is formed by the delta and b chains.

The protein resides in the cell membrane. F(1)F(0) ATP synthase produces ATP from ADP in the presence of a proton or sodium gradient. F-type ATPases consist of two structural domains, F(1) containing the extramembraneous catalytic core and F(0) containing the membrane proton channel, linked together by a central stalk and a peripheral stalk. During catalysis, ATP synthesis in the catalytic domain of F(1) is coupled via a rotary mechanism of the central stalk subunits to proton translocation. Its function is as follows. Component of the F(0) channel, it forms part of the peripheral stalk, linking F(1) to F(0). The polypeptide is ATP synthase subunit b (Shouchella clausii (strain KSM-K16) (Alkalihalobacillus clausii)).